A 665-amino-acid polypeptide reads, in one-letter code: SH3 domain-containing kinase-binding protein 1 (665 aa).

2 consecutive SH3 domains span residues 1-58 (MVEA…EIKK) and 98-157 (RRRR…ELSG). Residues serine 156, serine 159, serine 183, and serine 230 each carry the phosphoserine modification. Residues 159-200 (SDELGISQDEQLSKSSLRETTGSESDGGDSSSTKSEGANGTV) form a disordered region. Positions 177-195 (ETTGSESDGGDSSSTKSEG) are enriched in low complexity. Threonine 254 carries the post-translational modification Phosphothreonine. In terms of domain architecture, SH3 3 spans 267-328 (KSKDYCKVIF…PDNFVKLLPP (62 aa)). Disordered regions lie at residues 328–444 (PDFE…LAGS) and 467–610 (DSVV…AAVE). Residues 355-390 (TERKHEIKKIPPERPEMLPNRTEEKERPEREPKLDL) are compositionally biased toward basic and acidic residues. A Phosphoserine modification is found at serine 436. Residues 469–484 (VVSSTEKLSHPTTSRP) show a composition bias toward polar residues. Positions 491–510 (PPSQSLTSSSLSSPDIFDSP) are enriched in low complexity. Residues serine 509, serine 511, and serine 521 each carry the phosphoserine modification. Residues 517–531 (EEHISLAHRGVDASK) show a composition bias toward basic and acidic residues. Polar residues predominate over residues 535-546 (KTVTISQVSDNK). Over residues 564-582 (APLSSAAPSPLSSSLGTAG) the composition is skewed to low complexity. Serine 587 is modified (phosphoserine). Residues 602–664 (AASSQAAVEE…VNDIKKALQS (63 aa)) are a coiled coil.

Can self-associate and form homotetramers. Interacts with CD2, F-actin capping protein, PIK3R3, GRB2, EGFR, MET, BLNK, MAP3K4, PDCD6IP, SPRY2, ARHGAP17, ARHGAP27, MAGI2, CRK, BCAR1, SOS1, ASAP1, ARAP3, HIP1R, SYNJ2, INPP5D and STAP1. Interacts with E3 ubiquitin-protein ligases CBL and CBLB, but does not interact with CBLC. Two molecules of SH3KBP1 seem to bind through their respective SH3 1 domain to one molecule of CBLB. The interaction with CBL or CBLB and EGFR is increased upon EGF stimulation. The interaction with CBL is attenuated by PDCD6IP. Interacts (via SH3 domains) with ARAP1. The interaction is independent of EGF and does not affect ARAP1 GTPase-activating activity but is involved in regulating ubiquitination and endocytic trafficking of EGFR. ARAP1 competes with CBL for binding to SH3KBP1 and prevents interaction of CBL with SH3KBP1; this is likely to regulate SH3KBP1-mediated internalization of EGFR. Interacts through its proline-rich region with the SH3 domain of endophilins SH3GL1, SH3GL2 and SH3GL3. The SH3KBP1-endophilin complex seems to associate with a complex containing the phosphorylated receptor (EGFR or MET) and phosphorylated CBL. Probably associates with ASAP1 and phosphorylated EGFR. Probably part of a complex consisting of at least SH3KBP1, ASAP1 and ARAP3. Interacts with focal adhesion kinases PTK2/FAK1 and PTK2B/PYK2, probably as a dimer. Interacts with DAB2 and probably associates with chathrin through its interaction with DAB2. Part of a complex consisting of SH3KBP1, DAB2, and clathrin heavy chain. DAB2 and clathrin dissociate from SH3KBP1 following growth factor treatment, enabling interaction with CBL. Interacts with DDN and probably associates with MAGI2 through its interaction with DDN. Interacts with the SH3 domains of SRC tyrosine-protein kinases SRC, LCK, LYN, FGR, FYN and HCK. Interacts with TRADD, BIRC2, TRAF1, TRAF2 and TNFR1, and the association with a TNFR1-associated complex upon stimulation with TNF-alpha seems to be mediated by SRC. Interacts (via SH3 domains) with SHKBP1 (via PXXXPR motifs). Interaction with CBL is abolished in the presence of SHKBP1. Interacts (via SH3 domains) with ZFP36 (via extreme C-terminal region). Interacts with MAP3K4; this interaction enhances the association with ZFP36. In terms of assembly, (Microbial infection) Interacts (via SH3 domains) with Chikungunya virus non-structural protein 3 (via C-terminus); this interaction plays a role in initiation of viral replication. Post-translationally, monoubiquitinated by CBL and CBLB after EGF stimulation; probably on its C-terminus. As to expression, ubiquitously expressed. Also expressed in some cancer cell lines.

It localises to the cytoplasm. The protein resides in the cytoskeleton. It is found in the cytoplasmic vesicle membrane. The protein localises to the synapse. Its subcellular location is the synaptosome. It localises to the cell junction. The protein resides in the focal adhesion. Its function is as follows. Adapter protein involved in regulating diverse signal transduction pathways. Involved in the regulation of endocytosis and lysosomal degradation of ligand-induced receptor tyrosine kinases, including EGFR and MET/hepatocyte growth factor receptor, through an association with CBL and endophilins. The association with CBL, and thus the receptor internalization, may be inhibited by an interaction with PDCD6IP and/or SPRY2. Involved in regulation of ligand-dependent endocytosis of the IgE receptor. Attenuates phosphatidylinositol 3-kinase activity by interaction with its regulatory subunit. May be involved in regulation of cell adhesion; promotes the interaction between TTK2B and PDCD6IP. May be involved in the regulation of cellular stress response via the MAPK pathways through its interaction with MAP3K4. Is involved in modulation of tumor necrosis factor mediated apoptosis. Plays a role in the regulation of cell morphology and cytoskeletal organization. Required in the control of cell shape and migration. Has an essential role in the stimulation of B cell activation. The chain is SH3 domain-containing kinase-binding protein 1 (SH3KBP1) from Homo sapiens (Human).